The following is a 554-amino-acid chain: Dihydroxy-acid dehydratase (554 aa).

Residue Asp78 participates in Mg(2+) binding. A [2Fe-2S] cluster-binding site is contributed by Cys119. Positions 120 and 121 each coordinate Mg(2+). Lys121 is subject to N6-carboxylysine. Cys192 is a [2Fe-2S] cluster binding site. A Mg(2+)-binding site is contributed by Glu443. Ser469 (proton acceptor) is an active-site residue.

This sequence belongs to the IlvD/Edd family. Homodimer. The cofactor is [2Fe-2S] cluster. Mg(2+) is required as a cofactor.

The enzyme catalyses (2R)-2,3-dihydroxy-3-methylbutanoate = 3-methyl-2-oxobutanoate + H2O. It catalyses the reaction (2R,3R)-2,3-dihydroxy-3-methylpentanoate = (S)-3-methyl-2-oxopentanoate + H2O. Its pathway is amino-acid biosynthesis; L-isoleucine biosynthesis; L-isoleucine from 2-oxobutanoate: step 3/4. It participates in amino-acid biosynthesis; L-valine biosynthesis; L-valine from pyruvate: step 3/4. Functions in the biosynthesis of branched-chain amino acids. Catalyzes the dehydration of (2R,3R)-2,3-dihydroxy-3-methylpentanoate (2,3-dihydroxy-3-methylvalerate) into 2-oxo-3-methylpentanoate (2-oxo-3-methylvalerate) and of (2R)-2,3-dihydroxy-3-methylbutanoate (2,3-dihydroxyisovalerate) into 2-oxo-3-methylbutanoate (2-oxoisovalerate), the penultimate precursor to L-isoleucine and L-valine, respectively. The sequence is that of Dihydroxy-acid dehydratase from Shouchella clausii (strain KSM-K16) (Alkalihalobacillus clausii).